The following is a 461-amino-acid chain: Argininosuccinate lyase (461 aa).

It belongs to the lyase 1 family. Argininosuccinate lyase subfamily.

The protein localises to the cytoplasm. It carries out the reaction 2-(N(omega)-L-arginino)succinate = fumarate + L-arginine. It functions in the pathway amino-acid biosynthesis; L-arginine biosynthesis; L-arginine from L-ornithine and carbamoyl phosphate: step 3/3. The polypeptide is Argininosuccinate lyase (Trichormus variabilis (strain ATCC 29413 / PCC 7937) (Anabaena variabilis)).